The chain runs to 71 residues: VLIIAVLFLAASELVTADYTRDEWQYRAASLRDAMRNFRDTRCSPGGEVCTRHSPCCTGFLCNHIGGMCHH.

Positions 1 to 17 (VLIIAVLFLAASELVTA) are cleaved as a signal peptide. The propeptide occupies 18-42 (DYTRDEWQYRAASLRDAMRNFRDTR). Intrachain disulfides connect Cys-43-Cys-57, Cys-50-Cys-62, and Cys-56-Cys-69.

The protein belongs to the conotoxin O1 superfamily. Expressed by the venom duct.

The protein localises to the secreted. The chain is Conotoxin LvVIIB from Conus lividus (Livid cone).